A 461-amino-acid chain; its full sequence is Cysteine--tRNA ligase (461 aa).

Cys28 contributes to the Zn(2+) binding site. The short motif at 30–40 is the 'HIGH' region element; that stretch reads ITVYDLCHIGH. Positions 209, 234, and 238 each coordinate Zn(2+). A 'KMSKS' region motif is present at residues 266–270; sequence KMSKS. Lys269 is an ATP binding site.

Belongs to the class-I aminoacyl-tRNA synthetase family. Monomer. Requires Zn(2+) as cofactor.

The protein resides in the cytoplasm. It catalyses the reaction tRNA(Cys) + L-cysteine + ATP = L-cysteinyl-tRNA(Cys) + AMP + diphosphate. The protein is Cysteine--tRNA ligase of Salmonella dublin (strain CT_02021853).